Consider the following 238-residue polypeptide: NAD-dependent protein deacylase (238 aa).

The 237-residue stretch at 1 to 237 (MRGIMKVFVL…PAWVERLLAR (237 aa)) folds into the Deacetylase sirtuin-type domain. 12–31 (GAGVSAESGLGTFRDKDGVW) lines the NAD(+) pocket. Substrate contacts are provided by Y56 and R59. NAD(+) is bound at residue 94–97 (QNVD). The active-site Proton acceptor is the H112. Positions 120, 123, 139, and 142 each coordinate Zn(2+). NAD(+) contacts are provided by residues 179–181 (GTS), 205–207 (NLE), and A223.

Belongs to the sirtuin family. Class III subfamily. Requires Zn(2+) as cofactor.

It localises to the cytoplasm. It carries out the reaction N(6)-acetyl-L-lysyl-[protein] + NAD(+) + H2O = 2''-O-acetyl-ADP-D-ribose + nicotinamide + L-lysyl-[protein]. It catalyses the reaction N(6)-succinyl-L-lysyl-[protein] + NAD(+) + H2O = 2''-O-succinyl-ADP-D-ribose + nicotinamide + L-lysyl-[protein]. Its function is as follows. NAD-dependent lysine deacetylase and desuccinylase that specifically removes acetyl and succinyl groups on target proteins. Modulates the activities of several proteins which are inactive in their acylated form. This is NAD-dependent protein deacylase from Caulobacter vibrioides (strain ATCC 19089 / CIP 103742 / CB 15) (Caulobacter crescentus).